The chain runs to 225 residues: Ribosomal RNA small subunit methyltransferase G (225 aa).

S-adenosyl-L-methionine contacts are provided by residues Gly-71, Leu-76, 121–122, and Arg-139; that span reads AE. Residues 204–225 form a disordered region; sequence VVEARRATPSNGRGRPGRSSRR.

The protein belongs to the methyltransferase superfamily. RNA methyltransferase RsmG family.

It is found in the cytoplasm. Functionally, specifically methylates the N7 position of guanine in position 518 of 16S rRNA. This Mycobacterium sp. (strain JLS) protein is Ribosomal RNA small subunit methyltransferase G.